We begin with the raw amino-acid sequence, 300 residues long: Acetaldehyde dehydrogenase (300 aa).

Residue 11 to 14 (SGNI) coordinates NAD(+). Cys129 acts as the Acyl-thioester intermediate in catalysis. Residues 160-168 (SVGPGTRQN) and Asn271 each bind NAD(+).

Belongs to the acetaldehyde dehydrogenase family.

The catalysed reaction is acetaldehyde + NAD(+) + CoA = acetyl-CoA + NADH + H(+). The chain is Acetaldehyde dehydrogenase (mhpF) from Pseudoalteromonas translucida (strain TAC 125).